We begin with the raw amino-acid sequence, 64 residues long: Putative antitoxin MJ0975 (64 aa).

Belongs to the UPF0165 family.

Possibly the antitoxin component of a type II toxin-antitoxin (TA) system. Its cognate toxin is VapC2 (Potential). This chain is Putative antitoxin MJ0975 (vapB2), found in Methanocaldococcus jannaschii (strain ATCC 43067 / DSM 2661 / JAL-1 / JCM 10045 / NBRC 100440) (Methanococcus jannaschii).